Here is a 429-residue protein sequence, read N- to C-terminus: N5-carboxyaminoimidazole ribonucleotide synthase (429 aa).

Residues K117, K157, 194 to 197 (EERV), E202, and 280 to 281 (NE) each bind ATP. The region spanning 121–310 (RQRLAAAGVA…QFEQHLRAVL (190 aa)) is the ATP-grasp domain. The segment at 406 to 429 (RASDDAVGVPPACGGRSDEEERRL) is disordered.

The protein belongs to the PurK/PurT family. Homodimer.

The enzyme catalyses 5-amino-1-(5-phospho-beta-D-ribosyl)imidazole + hydrogencarbonate + ATP = 5-carboxyamino-1-(5-phospho-D-ribosyl)imidazole + ADP + phosphate + 2 H(+). Its pathway is purine metabolism; IMP biosynthesis via de novo pathway; 5-amino-1-(5-phospho-D-ribosyl)imidazole-4-carboxylate from 5-amino-1-(5-phospho-D-ribosyl)imidazole (N5-CAIR route): step 1/2. Catalyzes the ATP-dependent conversion of 5-aminoimidazole ribonucleotide (AIR) and HCO(3)(-) to N5-carboxyaminoimidazole ribonucleotide (N5-CAIR). The chain is N5-carboxyaminoimidazole ribonucleotide synthase from Mycobacterium bovis (strain ATCC BAA-935 / AF2122/97).